The primary structure comprises 371 residues: uncharacterized protein (371 aa).

To E.coli YcjY.

This is an uncharacterized protein from Pseudomonas aeruginosa (strain ATCC 15692 / DSM 22644 / CIP 104116 / JCM 14847 / LMG 12228 / 1C / PRS 101 / PAO1).